The chain runs to 486 residues: L-arabinose isomerase (486 aa).

Residues E299, E324, H341, and H440 each coordinate Mn(2+).

Belongs to the arabinose isomerase family. It depends on Mn(2+) as a cofactor.

The catalysed reaction is beta-L-arabinopyranose = L-ribulose. Its pathway is carbohydrate degradation; L-arabinose degradation via L-ribulose; D-xylulose 5-phosphate from L-arabinose (bacterial route): step 1/3. Its function is as follows. Catalyzes the conversion of L-arabinose to L-ribulose. This chain is L-arabinose isomerase, found in Shouchella clausii (strain KSM-K16) (Alkalihalobacillus clausii).